A 370-amino-acid chain; its full sequence is 4-hydroxy-3-methylbut-2-en-1-yl diphosphate synthase (flavodoxin) (370 aa).

Residues Cys268, Cys271, Cys303, and Glu310 each coordinate [4Fe-4S] cluster.

The protein belongs to the IspG family. Requires [4Fe-4S] cluster as cofactor.

The catalysed reaction is (2E)-4-hydroxy-3-methylbut-2-enyl diphosphate + oxidized [flavodoxin] + H2O + 2 H(+) = 2-C-methyl-D-erythritol 2,4-cyclic diphosphate + reduced [flavodoxin]. The protein operates within isoprenoid biosynthesis; isopentenyl diphosphate biosynthesis via DXP pathway; isopentenyl diphosphate from 1-deoxy-D-xylulose 5-phosphate: step 5/6. Functionally, converts 2C-methyl-D-erythritol 2,4-cyclodiphosphate (ME-2,4cPP) into 1-hydroxy-2-methyl-2-(E)-butenyl 4-diphosphate. The sequence is that of 4-hydroxy-3-methylbut-2-en-1-yl diphosphate synthase (flavodoxin) from Bacillus cereus (strain B4264).